Consider the following 251-residue polypeptide: V-set and transmembrane domain-containing protein 2B (251 aa).

Positions 1–25 are cleaved as a signal peptide; it reads MEKQGLFSALCYLMLNTPLLFSVNA. The 117-residue stretch at 26–142 folds into the Ig-like V-type domain; that stretch reads TFTEVPKDVT…DETQEHKAQA (117 aa). Topologically, residues 26 to 226 are extracellular; that stretch reads TFTEVPKDVT…RQQHGSGTGP (201 aa). Cys46 and Cys125 are disulfide-bonded. A disordered region spans residues 157–213; it reads AAEAVSHIQSSGPRRNNPSSRATPEPGNKRAVPPAENLAPSLSTAASSSASPAPGKA. Low complexity-rich tracts occupy residues 166 to 177 and 195 to 213; these read SSGPRRNNPSSR and APSL…PGKA. Residues 227 to 247 form a helical membrane-spanning segment; it reads IFANDPALYMFLLIFHQLVYL. Topologically, residues 248 to 251 are cytoplasmic; the sequence is LLNH.

It is found in the membrane. In Xenopus tropicalis (Western clawed frog), this protein is V-set and transmembrane domain-containing protein 2B (vstm2b).